Consider the following 1427-residue polypeptide: Protein NPAT (1427 aa).

The interval 1 to 318 is interaction with MIZF; sequence MLLPSDVARL…EEAIQDILEQ (318 aa). Positions 3 to 35 constitute a LisH domain; it reads LPSDVARLVLGYLQQENLISTCQTFILESSDLK. Required for activation of histone gene transcription and interaction with MIZF regions lie at residues 5–25 and 121–145; these read SDVARLVLGYLQQENLISTCQ and KRQRKLASQTAPASAELLTLPYLSG. The interval 199–231 is disordered; it reads KKAHASLMSPGRRKSESQRKSTTLSGPHSTIRN. Ser-207 is modified (phosphoserine). The span at 218-231 shows a compositional bias: polar residues; the sequence is KSTTLSGPHSTIRN. Residues 262–338 are mediates transcriptional activation; that stretch reads KLAENINKFL…FDLFDYGKTK (77 aa). Phosphoserine is present on residues Ser-554 and Ser-599. The span at 628–644 shows a compositional bias: polar residues; that stretch reads SLSSTKQPSNDSASVEL. Disordered stretches follow at residues 628-669 and 683-732; these read SLSS…VKEE and EKVA…SAEI. The segment at 629–653 is required for acceleration of G1 phase; it reads LSSTKQPSNDSASVELNHTENEAQA. Residues 654-665 are compositionally biased toward low complexity; it reads SKSENSQEPSSS. The segment covering 695-711 has biased composition (polar residues); sequence VENSHSLPPESVCSSVG. 2 positions are modified to phosphoserine; by CDK2: Ser-775 and Ser-779. 2 required for acceleration of G1 phase regions span residues 828–853 and 1039–1054; these read QNEDGIAFSANVTPCVSKDGGYIQLM and KSEETTVPFPEESIVP. 2 disordered regions span residues 1095-1121 and 1133-1152; these read FPNLDSPNVSSTLKPPSNNAIKREKEK and SAISRHTTIRETQSEKKVSP. The span at 1097-1114 shows a compositional bias: polar residues; that stretch reads NLDSPNVSSTLKPPSNNA. Ser-1100 carries the phosphoserine; by CDK2 modification. Residues Lys-1116 and Lys-1149 each participate in a glycyl lysine isopeptide (Lys-Gly) (interchain with G-Cter in SUMO2) cross-link. The span at 1140-1151 shows a compositional bias: basic and acidic residues; that stretch reads TIRETQSEKKVS. Phosphoserine occurs at positions 1151 and 1200. Lys-1228 is subject to N6-acetyllysine. Residues 1228-1252 are required for acceleration of G1 phase; sequence KDLKQEQTKSASSLITTEMLQDIQR. Disordered regions lie at residues 1253-1327 and 1348-1413; these read HSSV…SENS and SATP…FPAG. Ser-1254 carries the phosphoserine modification. Thr-1270 bears the Phosphothreonine; by CDK2 mark. Positions 1276–1285 are enriched in basic and acidic residues; that stretch reads GEKHKEEPID. Residue Lys-1280 forms a Glycyl lysine isopeptide (Lys-Gly) (interchain with G-Cter in SUMO2) linkage. The tract at residues 1325-1349 is required for acceleration of G1 phase; the sequence is ENSVNMAAHTLMILSRAAISRTTSA. Polar residues predominate over residues 1348–1365; that stretch reads SATPLKDNTQQFRASSRS. The residue at position 1350 (Thr-1350) is a Phosphothreonine; by CDK2. A compositionally biased stretch (basic and acidic residues) spans 1371-1382; it reads KIEELDERERNS. Polar residues predominate over residues 1383 to 1394; sequence RPSSKNLTNSSI. Positions 1396 to 1406 are enriched in basic residues; the sequence is MKKKKIKKKKL.

Belongs to the NPAT family. As to quaternary structure, interacts with the cylin/CDK complexes CCNE1/CDK2 and CCNA1/CDK2. Interacts with BZW1, CASP8AP2, CREBBP, MIZF and YY1. Interacts with the RUVBL1, RUVBL2 and TRRAP subunits of the NuA4 complex. May also interact with GAPDH, NME1, NME2 and STIP1. Phosphorylated at Ser-775, Ser-779, Ser-1100, Thr-1270 and Thr-1350 by CCNE1/CDK2 at G1-S transition and until prophase, which promotes association with histone gene clusters and stimulates activation of histone transcription. Also phosphorylated by CCNA1/CDK2 in vitro. Ubiquitously expressed.

The protein localises to the nucleus. It is found in the cajal body. Its function is as follows. Required for progression through the G1 and S phases of the cell cycle and for S phase entry. Activates transcription of the histone H2A, histone H2B, histone H3 and histone H4 genes in conjunction with MIZF. Also positively regulates the ATM, MIZF and PRKDC promoters. Transcriptional activation may be accomplished at least in part by the recruitment of the NuA4 histone acetyltransferase (HAT) complex to target gene promoters. This Homo sapiens (Human) protein is Protein NPAT (NPAT).